Reading from the N-terminus, the 301-residue chain is Glycine--tRNA ligase alpha subunit (301 aa).

It belongs to the class-II aminoacyl-tRNA synthetase family. Tetramer of two alpha and two beta subunits.

The protein localises to the cytoplasm. It catalyses the reaction tRNA(Gly) + glycine + ATP = glycyl-tRNA(Gly) + AMP + diphosphate. The protein is Glycine--tRNA ligase alpha subunit of Shewanella baltica (strain OS223).